The primary structure comprises 780 residues: MSEEDWPSPKFREHVIQRLEPELARNRQNAPNLPVPGDARQVEEYVFAKCMSKDEYMRTIAKVINAINCNSKSAAVPSVLQPSQFHSPPCTTAALLGNTPAGGTPGYRAPVPPDPQPTSAQARNPPVTVATTQASTTPSAPNPPGGLPAPSASATAAVAAAVASFPSPDTSIRPGGQITPGSQAPGGGPTPAPNVPFPNGSSQMNGGPAMGQPPPQMGAPNMGGPPNGYGGYGMMNGPPGSGAPMGGNPYNQQIKKDMDQARPWDPSAHMYQQQPQWGAMPPQQPHGYPGRPMNGQGATPTGPSSVLESLINQPQQYPGHHNQMGPPGDRNVAAQRAAAQQQQQQQQQQQQQRPGMVPNQGMMSSEDQTVYSAKLRNMRGSCDSLRTRARQCRHEGNHEAAHKLEVMLSVLEGKRVVSLEYLNHLEMWIARKQDFLNIAPMSQNQNHMGMNDPMMNGEHAMLGNGQVPNPYGGHPGYGHQQYMGPPPPHMQMHQPPMWHQQQHQQQQRMMPQDHMMMQGGGGPVHGMYRGDMGHDPMTSPVNNHRHAPYPNPAAMRNNMRMPNGPGPIGRDRNSMSGSSMSGPSSGAPSMNPMGTPNQKMGTPGSMGGMSGLDDLNYDDFLPNPTPIDALQPTLHVGQNSMNAGPPVQRSNLNETARKELQILDARFEIDPNHQRHDANHIIVVCKIRNQQFPPLRLVVPTTYPAGNVTVDRAVIDLDAYLYDDLQNSVYERLSRPGLSSITDYLNAWEEQVNQYQNQTSGGLDVAFNVGNDFFYDNLNL.

The tract at residues 1 to 124 (MSEEDWPSPK…PQPTSAQARN (124 aa)) is interaction with nhr-49. Residues 2–96 (SEEDWPSPKF…SPPCTTAALL (95 aa)) are interaction with sbp-1. Disordered stretches follow at residues 91–152 (TTAA…APSA), 166–363 (PSPD…QGMM), and 564–597 (GPGP…GTPN). Positions 125–139 (PPVTVATTQASTTPS) are enriched in low complexity. The span at 225-245 (PPNGYGGYGMMNGPPGSGAPM) shows a compositional bias: gly residues. Positions 296 to 316 (QGATPTGPSSVLESLINQPQQ) are enriched in polar residues. Low complexity-rich tracts occupy residues 333–353 (AAQR…QQQR) and 574–594 (SMSG…NPMG).

This sequence belongs to the Mediator complex subunit 15 family. In terms of assembly, component of the Mediator complex. Interacts with nhr-49, nhr-64 and sbp-1. In terms of tissue distribution, expressed in the intestine and head neurons.

The protein localises to the nucleus. Its function is as follows. Component of the Mediator complex, a coactivator involved in regulated gene transcription of nearly all RNA polymerase II-dependent genes. Mediator functions as a bridge to convey information from gene-specific regulatory proteins to the basal RNA polymerase II transcription machinery. Mediator is recruited to promoters by direct interactions with regulatory proteins and serves as a scaffold for the assembly of a functional preinitiation complex with RNA polymerase II and the general transcription factors. Required for regulated expression of genes controlling fatty acid desaturation by transcription factors including sbp-1 and nhr-49. Involved in the response to simulated microgravity, in concert with sbp-1, probably acting in the intestine. The protein is Mediator of RNA polymerase II transcription subunit 15 (mdt-15) of Caenorhabditis elegans.